We begin with the raw amino-acid sequence, 288 residues long: Polyamine aminopropyltransferase (288 aa).

The region spanning 11–245 (IEWYPRGYGV…SPWSFLVGVK (235 aa)) is the PABS domain. Gln-36 provides a ligand contact to S-methyl-5'-thioadenosine. Spermidine is bound by residues His-67 and Asp-91. Residues Glu-111 and 148 to 149 (DG) each bind S-methyl-5'-thioadenosine. The active-site Proton acceptor is the Asp-166. 166-169 (DSTD) is a spermidine binding site. Position 173 (Pro-173) interacts with S-methyl-5'-thioadenosine.

Belongs to the spermidine/spermine synthase family. Homodimer or homotetramer.

The protein resides in the cytoplasm. It carries out the reaction S-adenosyl 3-(methylsulfanyl)propylamine + agmatine = N(1)-(3-aminopropyl)agmatine + S-methyl-5'-thioadenosine + H(+). The enzyme catalyses S-adenosyl 3-(methylsulfanyl)propylamine + putrescine = S-methyl-5'-thioadenosine + spermidine + H(+). It catalyses the reaction cadaverine + S-adenosyl 3-(methylsulfanyl)propylamine = aminopropylcadaverine + S-methyl-5'-thioadenosine + H(+). The protein operates within amine and polyamine biosynthesis; spermidine biosynthesis; spermidine from putrescine: step 1/1. Functionally, involved in the biosynthesis of polyamines which are thought to support the growth of thermophilic microorganisms under high-temperature conditions. It seems that long-chain and branched-chain of polyamines effectively stabilize DNA and RNA, respectively. Catalyzes the irreversible transfer of a propylamine group from the amino donor S-adenosylmethioninamine (decarboxy-AdoMet) to agmatine to yield N1-aminopropylagmatine. It can also use cadaverine (1,5-diaminopentane) and putrescine (1,4-diaminobutane) as substrate with a lower activity than that of agmatine. The reaction involves a nucleophilic attack on the C-3 methylene of the propylamine moiety adjacent to the positively charged sulfur of decarboxy-AdoMet. This Thermococcus kodakarensis (strain ATCC BAA-918 / JCM 12380 / KOD1) (Pyrococcus kodakaraensis (strain KOD1)) protein is Polyamine aminopropyltransferase.